Consider the following 454-residue polypeptide: tRNA modification GTPase MnmE (454 aa).

The (6S)-5-formyl-5,6,7,8-tetrahydrofolate site is built by Arg-23, Glu-80, and Lys-120. In terms of domain architecture, TrmE-type G spans 216–377; the sequence is GMKVVIAGRP…LRNHLKQSMG (162 aa). Asn-226 lines the K(+) pocket. Residues 226–231, 245–251, 270–273, 335–338, and 358–360 each bind GTP; these read NAGKSS, TDIAGTT, DTAG, NKAD, and SAR. Position 230 (Ser-230) interacts with Mg(2+). Thr-245, Ile-247, and Thr-250 together coordinate K(+). Thr-251 lines the Mg(2+) pocket. Residue Lys-454 coordinates (6S)-5-formyl-5,6,7,8-tetrahydrofolate.

This sequence belongs to the TRAFAC class TrmE-Era-EngA-EngB-Septin-like GTPase superfamily. TrmE GTPase family. In terms of assembly, homodimer. Heterotetramer of two MnmE and two MnmG subunits. It depends on K(+) as a cofactor.

It is found in the cytoplasm. Its function is as follows. Exhibits a very high intrinsic GTPase hydrolysis rate. Involved in the addition of a carboxymethylaminomethyl (cmnm) group at the wobble position (U34) of certain tRNAs, forming tRNA-cmnm(5)s(2)U34. This chain is tRNA modification GTPase MnmE, found in Escherichia coli O6:K15:H31 (strain 536 / UPEC).